A 92-amino-acid polypeptide reads, in one-letter code: NELL2-interacting cell ontogeny regulator 1 (92 aa).

An N-terminal signal peptide occupies residues 1 to 30; it reads MALPSAWSVMRVVIPFISVLGLLGVRLVGA.

The protein belongs to the NICOL family.

The protein localises to the secreted. It localises to the cytoplasm. The protein resides in the perinuclear region. Its function is as follows. mRNA-binding protein which interacts with a range of target mRNAs and may promote extracellular matrix production. May function as a component of lumicrine signaling and may play a crucial role in epididymal-mediated sperm maturation and male fertility. The chain is NELL2-interacting cell ontogeny regulator 1 from Gallus gallus (Chicken).